The chain runs to 404 residues: V-set and immunoglobulin domain-containing protein 1 (404 aa).

An N-terminal signal peptide occupies residues 1 to 22; that stretch reads MMVFAFWKVFLILNCLAGQVNM. Positions 23–133 constitute an Ig-like V-type domain; sequence VQVTIPDTFV…DFFGKNQGIL (111 aa). Topologically, residues 23-233 are extracellular; sequence VQVTIPDTFV…EIDLTSSDPE (211 aa). N-linked (GlcNAc...) asparagine glycosylation occurs at asparagine 39. 2 cysteine pairs are disulfide-bonded: cysteine 44/cysteine 117 and cysteine 162/cysteine 212. Positions 141–228 constitute an Ig-like C2-type domain; that stretch reads PSKPFCSIQG…GNSSCEIDLT (88 aa). Residues asparagine 201 and asparagine 220 are each glycosylated (N-linked (GlcNAc...) asparagine). The helical transmembrane segment at 234 to 254 threads the bilayer; it reads VGIIIGALVGALTGAAIIICV. Residues 255-404 lie on the Cytoplasmic side of the membrane; it reads VYFARNKVKS…REEEKETVKA (150 aa). Disordered regions lie at residues 266–285 and 298–404; these read QKNLNSSTELEPMTKVHHSR and EGTL…TVKA. 2 positions are modified to phosphoserine: serine 271 and serine 272. A compositionally biased stretch (polar residues) spans 301–314; sequence LPSSIHASHNTEPT. The span at 357–383 shows a compositional bias: acidic residues; that stretch reads MELEPETEPEPEPEPEPQPELESELEP. Positions 393 to 404 are enriched in basic and acidic residues; that stretch reads PMREEEKETVKA.

The protein resides in the membrane. The sequence is that of V-set and immunoglobulin domain-containing protein 1 (Vsig1) from Rattus norvegicus (Rat).